A 119-amino-acid chain; its full sequence is Ribonuclease P protein component (119 aa).

Belongs to the RnpA family. In terms of assembly, consists of a catalytic RNA component (M1 or rnpB) and a protein subunit.

It carries out the reaction Endonucleolytic cleavage of RNA, removing 5'-extranucleotides from tRNA precursor.. In terms of biological role, RNaseP catalyzes the removal of the 5'-leader sequence from pre-tRNA to produce the mature 5'-terminus. It can also cleave other RNA substrates such as 4.5S RNA. The protein component plays an auxiliary but essential role in vivo by binding to the 5'-leader sequence and broadening the substrate specificity of the ribozyme. This chain is Ribonuclease P protein component, found in Corynebacterium diphtheriae (strain ATCC 700971 / NCTC 13129 / Biotype gravis).